A 394-amino-acid polypeptide reads, in one-letter code: Exodeoxyribonuclease 7 large subunit (394 aa).

Belongs to the XseA family. As to quaternary structure, heterooligomer composed of large and small subunits.

The protein localises to the cytoplasm. The enzyme catalyses Exonucleolytic cleavage in either 5'- to 3'- or 3'- to 5'-direction to yield nucleoside 5'-phosphates.. Functionally, bidirectionally degrades single-stranded DNA into large acid-insoluble oligonucleotides, which are then degraded further into small acid-soluble oligonucleotides. In Thermotoga petrophila (strain ATCC BAA-488 / DSM 13995 / JCM 10881 / RKU-1), this protein is Exodeoxyribonuclease 7 large subunit.